A 93-amino-acid polypeptide reads, in one-letter code: DNA-directed RNA polymerase subunit Rpo11 (93 aa).

The protein belongs to the archaeal Rpo11/eukaryotic RPB11/RPC19 RNA polymerase subunit family. Part of the RNA polymerase complex.

The protein localises to the cytoplasm. The catalysed reaction is RNA(n) + a ribonucleoside 5'-triphosphate = RNA(n+1) + diphosphate. In terms of biological role, DNA-dependent RNA polymerase (RNAP) catalyzes the transcription of DNA into RNA using the four ribonucleoside triphosphates as substrates. This is DNA-directed RNA polymerase subunit Rpo11 from Methanocella arvoryzae (strain DSM 22066 / NBRC 105507 / MRE50).